A 103-amino-acid chain; its full sequence is Large ribosomal subunit protein bL21 (103 aa).

It belongs to the bacterial ribosomal protein bL21 family. As to quaternary structure, part of the 50S ribosomal subunit. Contacts protein L20.

Functionally, this protein binds to 23S rRNA in the presence of protein L20. The sequence is that of Large ribosomal subunit protein bL21 from Lactobacillus helveticus (strain DPC 4571).